Consider the following 823-residue polypeptide: Mitochondrial intermediate peptidase 2 (823 aa).

The transit peptide at 1 to 33 (MRRLQQSLRRRSARRCPFILIPHRLLTTSYASY) directs the protein to the mitochondrion. Residues 532-553 (IDGDGLPEDWDKPYGPGLEADK) form a disordered region. Residue His-595 coordinates Zn(2+). The active site involves Glu-596. Zn(2+) is bound by residues His-599 and His-602.

This sequence belongs to the peptidase M3 family. The cofactor is Zn(2+).

Its subcellular location is the mitochondrion matrix. The enzyme catalyses Release of an N-terminal octapeptide as second stage of processing of some proteins imported into the mitochondrion.. In terms of biological role, cleaves proteins, imported into the mitochondrion, to their mature size. While most mitochondrial precursor proteins are processed to the mature form in one step by mitochondrial processing peptidase (MPP), the sequential cleavage by MIP of an octapeptide after initial processing by MPP is a required step for a subgroup of nuclear-encoded precursor proteins destined for the matrix or the inner membrane. The chain is Mitochondrial intermediate peptidase 2 (OCT2) from Cryptococcus neoformans var. neoformans serotype D (strain B-3501A) (Filobasidiella neoformans).